The primary structure comprises 624 residues: Interleukin-1 receptor-associated kinase-like 2 (624 aa).

The 82-residue stretch at 13–94 folds into the Death domain; that stretch reads LDDLCRNIDT…RAAQIVLSWK (82 aa). The region spanning 210–475 is the Protein kinase domain; it reads FDQSHRISEG…LPEACAETWA (266 aa). Residues 216–224, lysine 237, and 337–340 each bind ATP; these read ISEGTFADI and KSAN. 2 disordered regions span residues 508–536 and 549–593; these read SLPWSRVSEDTGSSSNTPEETDDVDNSSL and RVSS…ETSW. Positions 558 to 577 are enriched in polar residues; sequence GNGTAQPSTSGRQEADSSSE.

It belongs to the protein kinase superfamily. TKL Ser/Thr protein kinase family. Pelle subfamily. As to quaternary structure, interacts with MYD88. IL-1 stimulation leads to the formation of a signaling complex which dissociates from the IL-1 receptor following the binding of PELI1.

Its function is as follows. Binds to the IL-1 type I receptor following IL-1 engagement, triggering intracellular signaling cascades leading to transcriptional up-regulation and mRNA stabilization. This chain is Interleukin-1 receptor-associated kinase-like 2 (Irak2), found in Rattus norvegicus (Rat).